We begin with the raw amino-acid sequence, 283 residues long: Nucleotide-binding protein THEYE_A0235 (283 aa).

An ATP-binding site is contributed by 12–19 (GLSGGGKT). GTP is bound at residue 62–65 (DIRV).

The protein belongs to the RapZ-like family.

Displays ATPase and GTPase activities. The sequence is that of Nucleotide-binding protein THEYE_A0235 from Thermodesulfovibrio yellowstonii (strain ATCC 51303 / DSM 11347 / YP87).